A 331-amino-acid chain; its full sequence is Anthranilate phosphoribosyltransferase (331 aa).

5-phospho-alpha-D-ribose 1-diphosphate-binding positions include Gly-79, 82–83 (GD), Thr-87, 89–92 (NIST), 107–115 (KHGNYGATS), and Ala-119. Gly-79 is a binding site for anthranilate. Residue Ser-91 coordinates Mg(2+). Asn-110 contributes to the anthranilate binding site. Arg-165 is an anthranilate binding site. Mg(2+)-binding residues include Asp-223 and Glu-224.

The protein belongs to the anthranilate phosphoribosyltransferase family. In terms of assembly, homodimer. The cofactor is Mg(2+).

The enzyme catalyses N-(5-phospho-beta-D-ribosyl)anthranilate + diphosphate = 5-phospho-alpha-D-ribose 1-diphosphate + anthranilate. It functions in the pathway amino-acid biosynthesis; L-tryptophan biosynthesis; L-tryptophan from chorismate: step 2/5. Functionally, catalyzes the transfer of the phosphoribosyl group of 5-phosphorylribose-1-pyrophosphate (PRPP) to anthranilate to yield N-(5'-phosphoribosyl)-anthranilate (PRA). This chain is Anthranilate phosphoribosyltransferase, found in Bacteroides fragilis (strain YCH46).